Consider the following 131-residue polypeptide: Glycine cleavage system H protein (131 aa).

Positions 24–106 (IATIGISAFA…YGEGWLLKLR (83 aa)) constitute a Lipoyl-binding domain. K65 carries the post-translational modification N6-lipoyllysine.

The protein belongs to the GcvH family. As to quaternary structure, the glycine cleavage system is composed of four proteins: P, T, L and H. (R)-lipoate serves as cofactor.

Functionally, the glycine cleavage system catalyzes the degradation of glycine. The H protein shuttles the methylamine group of glycine from the P protein to the T protein. The chain is Glycine cleavage system H protein from Gloeothece citriformis (strain PCC 7424) (Cyanothece sp. (strain PCC 7424)).